The sequence spans 317 residues: Hydroxyacyl-CoA dehydrogenase ChsB1 (317 aa).

Residues Leu-32, Asp-51, Asp-82, Ile-83, Asn-108, Ser-168, Tyr-181, Lys-185, and Thr-215 each coordinate NAD(+). Residues Ser-168, Tyr-181, and Lys-185 contribute to the active site.

Belongs to the short-chain dehydrogenases/reductases (SDR) family. Homodimer, with 1 active site on each face.

The enzyme catalyses (22S)-hydroxy-3-oxo-chol-4-ene-24-oyl-CoA + NAD(+) = 3,22-dioxochol-4-en-24-oyl-CoA + NADH + H(+). It participates in steroid metabolism; cholesterol degradation. A reversible dehydrogenase involved in cholesterol side-chain degradation. Catalyzes the oxidation of hydroxyl-cholesterol-CoA ester metabolic intermediate (22S)-HOCO-CoA (3-oxo-chol-4-ene-(22S)-hydroxy-24-oyl-CoA), the product of ChsH3, has no activity on (22R)-HOCO-CoA (the product of EchA19). Also acts on (3R)-hydroxyoctanoyl-CoA and 17-beta-hydroxyandrost-4-en-3-one, but not on 7-alpha-hydroxyandrost-4-en-3-one, uses NAD(+) but not NADP(+). The chain is Hydroxyacyl-CoA dehydrogenase ChsB1 from Mycobacterium tuberculosis (strain ATCC 25618 / H37Rv).